Here is a 132-residue protein sequence, read N- to C-terminus: Probable histone H2A.2 (132 aa).

It belongs to the histone H2A family. As to quaternary structure, the nucleosome is a histone octamer containing two molecules each of H2A, H2B, H3 and H4 assembled in one H3-H4 heterotetramer and two H2A-H2B heterodimers. The octamer wraps approximately 147 bp of DNA. Not ubiquitinated. Expressed mainly in non-dividing tissues of the plant. Also found in meristems and dividing cells.

The protein localises to the nucleus. It localises to the chromosome. Core component of nucleosome. Nucleosomes wrap and compact DNA into chromatin, limiting DNA accessibility to the cellular machineries which require DNA as a template. Histones thereby play a central role in transcription regulation, DNA repair, DNA replication and chromosomal stability. DNA accessibility is regulated via a complex set of post-translational modifications of histones, also called histone code, and nucleosome remodeling. The sequence is that of Probable histone H2A.2 from Arabidopsis thaliana (Mouse-ear cress).